Consider the following 59-residue polypeptide: ATP synthase subunit J, mitochondrial (59 aa).

The helical transmembrane segment at 9-25 threads the bilayer; sequence ILKVYWPFFVAGAAVYY.

This sequence belongs to the ATPase j subunit family. F-type ATPases have 2 components, CF(1) - the catalytic core - and CF(0) - the membrane proton channel. In yeast, the dimeric form of ATP synthase consists of 17 polypeptides: alpha, beta, gamma, delta, epsilon, 4 (B), 5 (OSCP), 6 (A), 8, 9 (C), d, E (Tim11), f, g, h, i/j and k.

The protein resides in the mitochondrion membrane. Functionally, mitochondrial membrane ATP synthase (F(1)F(0) ATP synthase or Complex V) produces ATP from ADP in the presence of a proton gradient across the membrane which is generated by electron transport complexes of the respiratory chain. F-type ATPases consist of two structural domains, F(1) - containing the extramembraneous catalytic core and F(0) - containing the membrane proton channel, linked together by a central stalk and a peripheral stalk. During catalysis, ATP synthesis in the catalytic domain of F(1) is coupled via a rotary mechanism of the central stalk subunits to proton translocation. Part of the complex F(0) domain. Minor subunit located with subunit a in the membrane. The chain is ATP synthase subunit J, mitochondrial (ATP18) from Saccharomyces cerevisiae (strain ATCC 204508 / S288c) (Baker's yeast).